The chain runs to 506 residues: Histidine ammonia-lyase (506 aa).

Residues 143 to 145 (ASG) constitute a cross-link (5-imidazolinone (Ala-Gly)). S144 carries the 2,3-didehydroalanine (Ser) modification.

Belongs to the PAL/histidase family. In terms of processing, contains an active site 4-methylidene-imidazol-5-one (MIO), which is formed autocatalytically by cyclization and dehydration of residues Ala-Ser-Gly.

It is found in the cytoplasm. The enzyme catalyses L-histidine = trans-urocanate + NH4(+). It participates in amino-acid degradation; L-histidine degradation into L-glutamate; N-formimidoyl-L-glutamate from L-histidine: step 1/3. The protein is Histidine ammonia-lyase of Salmonella agona (strain SL483).